We begin with the raw amino-acid sequence, 205 residues long: Ribonuclease HII (205 aa).

The region spanning 15–205 (SRVCGIDEAG…SFKLRKLGEK (191 aa)) is the RNase H type-2 domain. A divalent metal cation is bound by residues aspartate 21, glutamate 22, and aspartate 117.

It belongs to the RNase HII family. It depends on Mn(2+) as a cofactor. Mg(2+) is required as a cofactor.

It localises to the cytoplasm. The enzyme catalyses Endonucleolytic cleavage to 5'-phosphomonoester.. Functionally, endonuclease that specifically degrades the RNA of RNA-DNA hybrids. The sequence is that of Ribonuclease HII from Chlorobaculum parvum (strain DSM 263 / NCIMB 8327) (Chlorobium vibrioforme subsp. thiosulfatophilum).